The following is a 122-amino-acid chain: MIQMQTNLDVADNSGARRVMCIKVLGGSKRRYATVGDVIVVSIKEAIPRGKVKKGDVMKAVVVRVRKDIRRPDGSVIRFDRNAAVLINNQSEPVGTRIFGPVPRELRAKNHMKIISLAPEVL.

Belongs to the universal ribosomal protein uL14 family. As to quaternary structure, part of the 50S ribosomal subunit. Forms a cluster with proteins L3 and L19. In the 70S ribosome, L14 and L19 interact and together make contacts with the 16S rRNA in bridges B5 and B8.

Its function is as follows. Binds to 23S rRNA. Forms part of two intersubunit bridges in the 70S ribosome. This is Large ribosomal subunit protein uL14 from Rhodopseudomonas palustris (strain HaA2).